A 287-amino-acid polypeptide reads, in one-letter code: Cell wall protein PIR5 (287 aa).

A signal peptide spans 1-21 (MHYKKAFLASLLSSIALTAYA). The propeptide occupies 22-62 (PPEPWATLTPSSKMDGGTTEYRTSFGLAVIPFTVTESKVKR). 4 PIR1/2/3 repeats span residues 62 to 80 (RNVISQINDGQVQVTTQKL), 81 to 99 (PHPVSQIGDGQIQVTTQKV), 104 to 122 (SHIVSQIGDGQLQITTAKN), and 144 to 162 (ATAVSQIHDGQVQVTISSA).

It belongs to the PIR protein family. In terms of processing, covalently linked to beta-1,3-glucan of the inner cell wall layer via an alkali-sensitive ester linkage between the gamma-carboxyl group of glutamic acids, arising from specific glutamines within the PIR1/2/3 repeats, and hydroxyl groups of glucoses of beta-1,3-glucan chains.

Its subcellular location is the secreted. The protein localises to the cell wall. Component of the outer cell wall layer. May be involved in meiosis and sporulation. This Saccharomyces cerevisiae (strain RM11-1a) (Baker's yeast) protein is Cell wall protein PIR5 (PIR5).